Here is a 524-residue protein sequence, read N- to C-terminus: GMP synthase [glutamine-hydrolyzing] (524 aa).

In terms of domain architecture, Glutamine amidotransferase type-1 spans 10–199 (PVLVVDFGAQ…LTEVAGLEQT (190 aa)). Catalysis depends on Cys-87, which acts as the Nucleophile. Catalysis depends on residues His-173 and Glu-175. A GMPS ATP-PPase domain is found at 200 to 398 (WTSANIAQQL…LGLPEEIVAR (199 aa)). 228 to 234 (SGGVDSA) is a binding site for ATP.

As to quaternary structure, homodimer.

It catalyses the reaction XMP + L-glutamine + ATP + H2O = GMP + L-glutamate + AMP + diphosphate + 2 H(+). It functions in the pathway purine metabolism; GMP biosynthesis; GMP from XMP (L-Gln route): step 1/1. Its function is as follows. Catalyzes the synthesis of GMP from XMP. This is GMP synthase [glutamine-hydrolyzing] (guaA) from Corynebacterium ammoniagenes (Brevibacterium ammoniagenes).